We begin with the raw amino-acid sequence, 372 residues long: Aminomethyltransferase (372 aa).

The protein belongs to the GcvT family. As to quaternary structure, the glycine cleavage system is composed of four proteins: P, T, L and H.

It carries out the reaction N(6)-[(R)-S(8)-aminomethyldihydrolipoyl]-L-lysyl-[protein] + (6S)-5,6,7,8-tetrahydrofolate = N(6)-[(R)-dihydrolipoyl]-L-lysyl-[protein] + (6R)-5,10-methylene-5,6,7,8-tetrahydrofolate + NH4(+). Functionally, the glycine cleavage system catalyzes the degradation of glycine. This is Aminomethyltransferase from Rubrobacter xylanophilus (strain DSM 9941 / JCM 11954 / NBRC 16129 / PRD-1).